The following is a 1920-amino-acid chain: rRNA biogenesis protein RRP5 (1920 aa).

Residues 1–65 are disordered; it reads MVVPQKKFAN…GTSLSKKERE (65 aa). S1 motif domains lie at 128-210, 226-291, 314-384, 400-473, 490-557, 577-646, 661-733, 753-822, 866-930, 958-1031, 1054-1129, 1153-1224, 1260-1334, 1369-1438, and 1459-1529; these read GMKL…LSLR, GMVF…LSSD, GMMV…LTLS, GDIF…GTLK, GMVT…VTYK, GLVT…LSFM, GSIV…LSSK, NSVV…LSLK, GSLI…LSLR, EVHQ…LLLD, GSVV…LSVK, GQCV…LVQR, GDIL…LSLR, DMGV…VTLK, and GDMI…LGMK. Disordered regions lie at residues 1535–1555 and 1605–1652; these read NGDD…ECDP and TDFD…LEHH. Basic and acidic residues predominate over residues 1620 to 1652; it reads NKDEKSKRREKQKDKEEREKKIQAAEGRLLEHH. HAT repeat units lie at residues 1651–1683, 1685–1722, 1726–1758, 1759–1791, 1828–1860, and 1862–1897; these read HHAP…FMLS, ADIE…LENE, PPEE…YERT, EQYK…SSLK, GVAD…QEIR, and GEDD…YEKS.

Highly expressed in flowers and at lower levels in roots, leaves, stems and siliques.

It is found in the nucleus. It localises to the nucleolus. Functionally, involved in the biogenesis of ribosomal RNA (rRNA). Required for the formation of 5.8S rRNA. Required for normal development of female gametophytes. The sequence is that of rRNA biogenesis protein RRP5 from Arabidopsis thaliana (Mouse-ear cress).